The primary structure comprises 266 residues: DNA-directed RNA polymerase subunit Rpo3 (266 aa).

Residues C205, C208, and C211 each contribute to the [3Fe-4S] cluster site.

It belongs to the archaeal Rpo3/eukaryotic RPB3 RNA polymerase subunit family. In terms of assembly, part of the RNA polymerase complex. Requires [3Fe-4S] cluster as cofactor.

It is found in the cytoplasm. The catalysed reaction is RNA(n) + a ribonucleoside 5'-triphosphate = RNA(n+1) + diphosphate. Functionally, DNA-dependent RNA polymerase (RNAP) catalyzes the transcription of DNA into RNA using the four ribonucleoside triphosphates as substrates. The chain is DNA-directed RNA polymerase subunit Rpo3 from Methanosarcina acetivorans (strain ATCC 35395 / DSM 2834 / JCM 12185 / C2A).